Consider the following 1051-residue polypeptide: Putative helicase/primase complex protein (1051 aa).

It belongs to the asfivirus F1055L family.

In terms of biological role, may be involved in DNA replication. This is Putative helicase/primase complex protein from Ornithodoros (relapsing fever ticks).